We begin with the raw amino-acid sequence, 757 residues long: RNA-directed RNA polymerase catalytic subunit (757 aa).

The disordered stretch occupies residues 50 to 82 (SEKGKWTTNTETGAPQLNPIDGPLPEDNEPSGY). Polar residues predominate over residues 55–64 (WTTNTETGAP). 2 consecutive short sequence motifs (nuclear localization signal) follow at residues 187–195 (RKRRVRDNM) and 203–216 (RTIG…NKRS). The tract at residues 249-256 (RGFVYFVE) is promoter-binding site. The RdRp catalytic domain occupies 286–483 (VRKMMTNSQD…GINMSKKKSY (198 aa)).

Belongs to the influenza viruses polymerase PB1 family. As to quaternary structure, influenza RNA polymerase is composed of three subunits: PB1, PB2 and PA. Interacts (via N-terminus) with PA (via C-terminus). Interacts (via C-terminus) with PB2 (via N-terminus); this interaction is essential for transcription initiation. In terms of processing, phosphorylated by host PRKCA.

It localises to the host nucleus. The protein localises to the host cytoplasm. It catalyses the reaction RNA(n) + a ribonucleoside 5'-triphosphate = RNA(n+1) + diphosphate. Its function is as follows. RNA-dependent RNA polymerase which is responsible for replication and transcription of virus RNA segments. The transcription of viral mRNAs occurs by a unique mechanism called cap-snatching. 5' methylated caps of cellular mRNAs are cleaved after 10-13 nucleotides by PA. In turn, these short capped RNAs are used as primers by PB1 for transcription of viral mRNAs. During virus replication, PB1 initiates RNA synthesis and copy vRNA into complementary RNA (cRNA) which in turn serves as a template for the production of more vRNAs. The protein is RNA-directed RNA polymerase catalytic subunit of Influenza A virus (strain A/Singapore/1/1957 H2N2).